A 120-amino-acid chain; its full sequence is Large ribosomal subunit protein bL12 (120 aa).

Belongs to the bacterial ribosomal protein bL12 family. In terms of assembly, homodimer. Part of the ribosomal stalk of the 50S ribosomal subunit. Forms a multimeric L10(L12)X complex, where L10 forms an elongated spine to which 2 to 4 L12 dimers bind in a sequential fashion. Binds GTP-bound translation factors.

Forms part of the ribosomal stalk which helps the ribosome interact with GTP-bound translation factors. Is thus essential for accurate translation. This is Large ribosomal subunit protein bL12 from Shouchella clausii (strain KSM-K16) (Alkalihalobacillus clausii).